We begin with the raw amino-acid sequence, 369 residues long: Probable dual-specificity RNA methyltransferase RlmN (369 aa).

E108 (proton acceptor) is an active-site residue. The Radical SAM core domain occupies Y114–R351. C121 and C362 are disulfide-bonded. [4Fe-4S] cluster-binding residues include C128, C132, and C135. S-adenosyl-L-methionine is bound by residues G183–E184, S217, S240–H242, and N319. C362 acts as the S-methylcysteine intermediate in catalysis.

This sequence belongs to the radical SAM superfamily. RlmN family. It depends on [4Fe-4S] cluster as a cofactor.

The protein localises to the cytoplasm. It catalyses the reaction adenosine(2503) in 23S rRNA + 2 reduced [2Fe-2S]-[ferredoxin] + 2 S-adenosyl-L-methionine = 2-methyladenosine(2503) in 23S rRNA + 5'-deoxyadenosine + L-methionine + 2 oxidized [2Fe-2S]-[ferredoxin] + S-adenosyl-L-homocysteine. It carries out the reaction adenosine(37) in tRNA + 2 reduced [2Fe-2S]-[ferredoxin] + 2 S-adenosyl-L-methionine = 2-methyladenosine(37) in tRNA + 5'-deoxyadenosine + L-methionine + 2 oxidized [2Fe-2S]-[ferredoxin] + S-adenosyl-L-homocysteine. In terms of biological role, specifically methylates position 2 of adenine 2503 in 23S rRNA and position 2 of adenine 37 in tRNAs. This chain is Probable dual-specificity RNA methyltransferase RlmN, found in Rhodococcus opacus (strain B4).